Here is a 659-residue protein sequence, read N- to C-terminus: 3-hydroxypropionyl-coenzyme A synthetase (659 aa).

Asp-525 is an active-site residue. Lys-616 bears the N6-acetyllysine mark.

The protein belongs to the ATP-dependent AMP-binding enzyme family.

It carries out the reaction 3-hydroxypropanoate + ATP + CoA = 3-hydroxypropanoyl-CoA + AMP + diphosphate. In terms of biological role, plays a role in the autotrophic CO(2) fixation pathway. Activates 3-hydroxypropionate to its CoA ester. Can also activate propionate, and to a lesser extent acrylate, acetate and butyrate. This Sulfurisphaera tokodaii (strain DSM 16993 / JCM 10545 / NBRC 100140 / 7) (Sulfolobus tokodaii) protein is 3-hydroxypropionyl-coenzyme A synthetase.